The primary structure comprises 293 residues: uncharacterized protein (293 aa).

Disordered stretches follow at residues 1 to 114 (MFLR…IPKL) and 268 to 293 (EETA…GRML). Phosphoserine occurs at positions 34, 35, and 89. Composition is skewed to basic and acidic residues over residues 73-95 (SSRD…RDKT) and 277-293 (GQER…GRML).

This is an uncharacterized protein from Mus musculus (Mouse).